Here is a 303-residue protein sequence, read N- to C-terminus: UDP-3-O-acyl-N-acetylglucosamine deacetylase (303 aa).

Residues histidine 78, histidine 237, and aspartate 241 each contribute to the Zn(2+) site. The Proton donor role is filled by histidine 264.

It belongs to the LpxC family. It depends on Zn(2+) as a cofactor.

The enzyme catalyses a UDP-3-O-[(3R)-3-hydroxyacyl]-N-acetyl-alpha-D-glucosamine + H2O = a UDP-3-O-[(3R)-3-hydroxyacyl]-alpha-D-glucosamine + acetate. It participates in glycolipid biosynthesis; lipid IV(A) biosynthesis; lipid IV(A) from (3R)-3-hydroxytetradecanoyl-[acyl-carrier-protein] and UDP-N-acetyl-alpha-D-glucosamine: step 2/6. Its function is as follows. Catalyzes the hydrolysis of UDP-3-O-myristoyl-N-acetylglucosamine to form UDP-3-O-myristoylglucosamine and acetate, the committed step in lipid A biosynthesis. This chain is UDP-3-O-acyl-N-acetylglucosamine deacetylase, found in Coxiella burnetii (strain CbuK_Q154) (Coxiella burnetii (strain Q154)).